A 132-amino-acid chain; its full sequence is Agouti-signaling protein (132 aa).

A signal peptide spans 1–22; sequence MDVTRLLLATLLVFLCFFTAYS. A glycan (N-linked (GlcNAc...) asparagine) is linked at asparagine 39. Over residues 61–79 the composition is skewed to basic and acidic residues; sequence EISRKEAEKKRSSKKEASM. The segment at 61-87 is disordered; the sequence is EISRKEAEKKRSSKKEASMKKVARPRT. Cystine bridges form between cysteine 93-cysteine 108, cysteine 100-cysteine 114, cysteine 107-cysteine 125, cysteine 111-cysteine 132, and cysteine 116-cysteine 123. The region spanning 93-132 is the Agouti domain; the sequence is CVATRDSCKPPAPACCDPCASCQCRFFRSACSCRVLSLNC.

It localises to the secreted. In terms of biological role, involved in the regulation of melanogenesis. The binding of ASP to MC1R precludes alpha-MSH initiated signaling and thus blocks production of cAMP, leading to a down-regulation of eumelanogenesis (brown/black pigment) and thus increasing synthesis of pheomelanin (yellow/red pigment). The chain is Agouti-signaling protein (ASIP) from Macaca fascicularis (Crab-eating macaque).